A 93-amino-acid chain; its full sequence is MADITDIKSIMYTEKSLALQEEGVIVVQTTPRMTKNGLKEVFKEFFGITPLRVNSMRVNGKVKRFKGIEGKRPDLKKFYVKLPEDAKIESLAV.

This sequence belongs to the universal ribosomal protein uL23 family. In terms of assembly, part of the 50S ribosomal subunit. Contacts protein L29, and trigger factor when it is bound to the ribosome.

One of the early assembly proteins it binds 23S rRNA. One of the proteins that surrounds the polypeptide exit tunnel on the outside of the ribosome. Forms the main docking site for trigger factor binding to the ribosome. The protein is Large ribosomal subunit protein uL23 of Sulfurovum sp. (strain NBC37-1).